The chain runs to 110 residues: Large ribosomal subunit protein uL22 (110 aa).

The protein belongs to the universal ribosomal protein uL22 family. In terms of assembly, part of the 50S ribosomal subunit.

This protein binds specifically to 23S rRNA; its binding is stimulated by other ribosomal proteins, e.g. L4, L17, and L20. It is important during the early stages of 50S assembly. It makes multiple contacts with different domains of the 23S rRNA in the assembled 50S subunit and ribosome. Functionally, the globular domain of the protein is located near the polypeptide exit tunnel on the outside of the subunit, while an extended beta-hairpin is found that lines the wall of the exit tunnel in the center of the 70S ribosome. The protein is Large ribosomal subunit protein uL22 of Salmonella arizonae (strain ATCC BAA-731 / CDC346-86 / RSK2980).